Consider the following 105-residue polypeptide: Cuticle protein AMP1A (105 aa).

A disordered region spans residues 1 to 21 (DRDAQTLTDERSDQGDGNFRY). Residues 16–81 (DGNFRYEFET…PSSDLLPVGP (66 aa)) enclose the Chitin-binding type R&amp;R domain.

In terms of tissue distribution, arthrodial membrane.

This chain is Cuticle protein AMP1A, found in Homarus americanus (American lobster).